The chain runs to 156 residues: CRIB domain-containing protein RIC10 (156 aa).

Residues 30-43 (IGFPTDVKHVAHIG) enclose the CRIB domain. Positions 68–77 (RPSSFSNARP) are enriched in polar residues. A disordered region spans residues 68–156 (RPSSFSNARP…SYKSTVSRLI (89 aa)). Low complexity predominate over residues 78 to 96 (STSFFTSSSSTDFDQGSSQ). Over residues 117–128 (NNKKKSSRRKKS) the composition is skewed to basic residues. Low complexity predominate over residues 129 to 156 (SSSSSSPKSSRSSVLSKSSYKSTVSRLI).

Expressed in roots, leaves, flowers and pollen.

It is found in the cytoplasm. Functionally, functions as a downstream effector of Rho-related GTP binding proteins of the 'Rho of Plants' (ROPs) family. Participates in the propagation of ROP GTPase signals in specific cellular responses. Is involved in pollen tube growth regulation. The sequence is that of CRIB domain-containing protein RIC10 (RIC10) from Arabidopsis thaliana (Mouse-ear cress).